Consider the following 526-residue polypeptide: Phosphoenolpyruvate carboxykinase (ATP) 2 (526 aa).

The substrate site is built by Arg55, Tyr190, and Lys196. ATP is bound by residues Lys196, His215, and 231–239; that span reads GLSGTGKTT. 2 residues coordinate Mn(2+): Lys196 and His215. Asp252 lines the Mn(2+) pocket. The ATP site is built by Glu280, Arg317, and Thr442. Substrate is bound at residue Arg317.

This sequence belongs to the phosphoenolpyruvate carboxykinase (ATP) family. Requires Mn(2+) as cofactor.

It is found in the cytoplasm. It carries out the reaction oxaloacetate + ATP = phosphoenolpyruvate + ADP + CO2. It functions in the pathway carbohydrate biosynthesis; gluconeogenesis. Involved in the gluconeogenesis. Catalyzes the conversion of oxaloacetate (OAA) to phosphoenolpyruvate (PEP) through direct phosphoryl transfer between the nucleoside triphosphate and OAA. In Moorella thermoacetica (strain ATCC 39073 / JCM 9320), this protein is Phosphoenolpyruvate carboxykinase (ATP) 2.